The following is a 281-amino-acid chain: Putative E3 ubiquitin-protein ligase SINA-like 6 (281 aa).

Residues M1 to R26 are disordered. Residues C45 to A81 form an RING-type zinc finger. The interval V95 to Q280 is SBD. Residues S98–S156 form an SIAH-type zinc finger. Zn(2+)-binding residues include C103, C110, H122, C126, C133, C138, H150, and H155.

Belongs to the SINA (Seven in absentia) family.

It catalyses the reaction S-ubiquitinyl-[E2 ubiquitin-conjugating enzyme]-L-cysteine + [acceptor protein]-L-lysine = [E2 ubiquitin-conjugating enzyme]-L-cysteine + N(6)-ubiquitinyl-[acceptor protein]-L-lysine.. Its pathway is protein modification; protein ubiquitination. Its function is as follows. E3 ubiquitin-protein ligase that mediates ubiquitination and subsequent proteasomal degradation of target proteins. E3 ubiquitin ligases accept ubiquitin from an E2 ubiquitin-conjugating enzyme in the form of a thioester and then directly transfers the ubiquitin to targeted substrates. It probably triggers the ubiquitin-mediated degradation of different substrates. In Arabidopsis thaliana (Mouse-ear cress), this protein is Putative E3 ubiquitin-protein ligase SINA-like 6.